Consider the following 277-residue polypeptide: Energy-coupling factor transporter ATP-binding protein EcfA1 (277 aa).

Positions 4-238 (IETQDLCHTY…PDLLSSVRLD (235 aa)) constitute an ABC transporter domain. Position 37 to 44 (37 to 44 (GPNGAGKS)) interacts with ATP.

It belongs to the ABC transporter superfamily. Energy-coupling factor EcfA family. As to quaternary structure, forms a stable energy-coupling factor (ECF) transporter complex composed of 2 membrane-embedded substrate-binding proteins (S component), 2 ATP-binding proteins (A component) and 2 transmembrane proteins (T component).

The protein resides in the cell membrane. ATP-binding (A) component of a common energy-coupling factor (ECF) ABC-transporter complex. Unlike classic ABC transporters this ECF transporter provides the energy necessary to transport a number of different substrates. In Methanospirillum hungatei JF-1 (strain ATCC 27890 / DSM 864 / NBRC 100397 / JF-1), this protein is Energy-coupling factor transporter ATP-binding protein EcfA1.